We begin with the raw amino-acid sequence, 368 residues long: 1-deoxy-D-xylulose 5-phosphate reductoisomerase (368 aa).

8 residues coordinate NADPH: Thr-7, Gly-8, Ser-9, Ile-10, Gly-31, Lys-32, Asn-33, and Asn-113. Lys-114 lines the 1-deoxy-D-xylulose 5-phosphate pocket. NADPH is bound at residue Glu-115. Residue Asp-133 coordinates Mn(2+). 1-deoxy-D-xylulose 5-phosphate contacts are provided by Ser-134, Glu-135, Ser-158, and His-181. Glu-135 lines the Mn(2+) pocket. Gly-187 lines the NADPH pocket. Positions 194, 199, 200, and 203 each coordinate 1-deoxy-D-xylulose 5-phosphate. A Mn(2+)-binding site is contributed by Glu-203.

The protein belongs to the DXR family. The cofactor is Mg(2+). It depends on Mn(2+) as a cofactor.

The enzyme catalyses 2-C-methyl-D-erythritol 4-phosphate + NADP(+) = 1-deoxy-D-xylulose 5-phosphate + NADPH + H(+). It participates in isoprenoid biosynthesis; isopentenyl diphosphate biosynthesis via DXP pathway; isopentenyl diphosphate from 1-deoxy-D-xylulose 5-phosphate: step 1/6. Catalyzes the NADPH-dependent rearrangement and reduction of 1-deoxy-D-xylulose-5-phosphate (DXP) to 2-C-methyl-D-erythritol 4-phosphate (MEP). The sequence is that of 1-deoxy-D-xylulose 5-phosphate reductoisomerase from Helicobacter pylori (strain ATCC 700392 / 26695) (Campylobacter pylori).